We begin with the raw amino-acid sequence, 138 residues long: Transcription factor Atoh7-b (138 aa).

The bHLH domain maps to 33–85 (KRRLAANARERRRMQGLNTAFDSLRKVVPQWGEDKKLSKYETLQMALSYIMAL).

Its subcellular location is the nucleus. It localises to the perikaryon. The protein localises to the cell projection. The protein resides in the axon. In terms of biological role, transcription factor that binds to DNA at the consensus sequence 5'-CAG[GC]TG-3'. Positively regulates the determination of retinal ganglion cell fate and formation of the optic nerve and retino-hypothalamic tract. Required for retinal circadian rhythm photoentrainment. Plays a role in brainstem auditory signaling and binaural processing. Regulates the differentiation of olfactory receptor neurons. During retinal neurogenesis, activates the transcription of several genes such as brn3d, coe3, cbfa2t2, glis2, elrC and xgadd45-gamma. In Xenopus laevis (African clawed frog), this protein is Transcription factor Atoh7-b.